The following is a 404-amino-acid chain: Argininosuccinate synthase (404 aa).

Residues alanine 11 to serine 19 and alanine 38 contribute to the ATP site. L-citrulline-binding residues include tyrosine 91 and serine 96. Glycine 121 is an ATP binding site. Residues threonine 123, asparagine 127, and aspartate 128 each coordinate L-aspartate. Asparagine 127 contributes to the L-citrulline binding site. 5 residues coordinate L-citrulline: arginine 131, serine 182, serine 191, glutamate 267, and tyrosine 279.

Belongs to the argininosuccinate synthase family. Type 1 subfamily. As to quaternary structure, homotetramer.

It is found in the cytoplasm. The enzyme catalyses L-citrulline + L-aspartate + ATP = 2-(N(omega)-L-arginino)succinate + AMP + diphosphate + H(+). It functions in the pathway amino-acid biosynthesis; L-arginine biosynthesis; L-arginine from L-ornithine and carbamoyl phosphate: step 2/3. This chain is Argininosuccinate synthase, found in Paramagnetospirillum magneticum (strain ATCC 700264 / AMB-1) (Magnetospirillum magneticum).